We begin with the raw amino-acid sequence, 287 residues long: Beta-lactamase GES-5 (287 aa).

A signal peptide spans 1 to 18; sequence MRFIHALLLAGIAHSAYA. A disulfide bridge connects residues Cys-63 and Cys-233. Ser-64 functions as the Nucleophile; acyl-ester intermediate in the catalytic mechanism. Ser-64, Ser-125, Asn-127, Thr-230, Thr-232, and Arg-238 together coordinate imipenem.

This sequence belongs to the class-A beta-lactamase family.

It is found in the secreted. It carries out the reaction a beta-lactam + H2O = a substituted beta-amino acid. Its activity is regulated as follows. Inhibited by the beta-lactamase-blocking agents clavulanic acid, sulbactam and tazobactam, via a covalent binding to Ser-64. In terms of biological role, confers resistance to penicillins, cephalosporins and carbapenems. Has carbapenem-hydrolyzing activity. In Klebsiella pneumoniae, this protein is Beta-lactamase GES-5.